A 303-amino-acid chain; its full sequence is Aliphatic sulfonates import ATP-binding protein SsuB (303 aa).

Residues 39 to 263 enclose the ABC transporter domain; the sequence is LHVRQVVKRY…ERGAAGFAQL (225 aa). Residue 71–78 coordinates ATP; it reads GRSGCGKS.

The protein belongs to the ABC transporter superfamily. Aliphatic sulfonates importer (TC 3.A.1.17.2) family. As to quaternary structure, the complex is composed of two ATP-binding proteins (SsuB), two transmembrane proteins (SsuC) and a solute-binding protein (SsuA).

The protein resides in the cell inner membrane. The enzyme catalyses ATP + H2O + aliphatic sulfonate-[sulfonate-binding protein]Side 1 = ADP + phosphate + aliphatic sulfonateSide 2 + [sulfonate-binding protein]Side 1.. Functionally, part of the ABC transporter complex SsuABC involved in aliphatic sulfonates import. Responsible for energy coupling to the transport system. This chain is Aliphatic sulfonates import ATP-binding protein SsuB, found in Cupriavidus necator (strain ATCC 17699 / DSM 428 / KCTC 22496 / NCIMB 10442 / H16 / Stanier 337) (Ralstonia eutropha).